Reading from the N-terminus, the 145-residue chain is Ribosome maturation factor RimP (145 aa).

Belongs to the RimP family.

The protein resides in the cytoplasm. Required for maturation of 30S ribosomal subunits. The polypeptide is Ribosome maturation factor RimP (Borreliella burgdorferi (strain ZS7) (Borrelia burgdorferi)).